Reading from the N-terminus, the 68-residue chain is Putative membrane protein insertion efficiency factor (68 aa).

It belongs to the UPF0161 family.

Its subcellular location is the cell membrane. In terms of biological role, could be involved in insertion of integral membrane proteins into the membrane. In Herpetosiphon aurantiacus (strain ATCC 23779 / DSM 785 / 114-95), this protein is Putative membrane protein insertion efficiency factor.